A 99-amino-acid polypeptide reads, in one-letter code: Nucleoid-associated protein SUB1611 (99 aa).

It belongs to the YbaB/EbfC family. In terms of assembly, homodimer.

The protein resides in the cytoplasm. It localises to the nucleoid. Binds to DNA and alters its conformation. May be involved in regulation of gene expression, nucleoid organization and DNA protection. In Streptococcus uberis (strain ATCC BAA-854 / 0140J), this protein is Nucleoid-associated protein SUB1611.